We begin with the raw amino-acid sequence, 603 residues long: UvrABC system protein C (603 aa).

A GIY-YIG domain is found at 15 to 92 (DQPGCYLMKD…IKKHDPRFNI (78 aa)). Residues 197–232 (KTVKNDLMKKMQEAAENMEFEKAGEFRDQINAIETT) enclose the UVR domain.

The protein belongs to the UvrC family. In terms of assembly, interacts with UvrB in an incision complex.

Its subcellular location is the cytoplasm. Its function is as follows. The UvrABC repair system catalyzes the recognition and processing of DNA lesions. UvrC both incises the 5' and 3' sides of the lesion. The N-terminal half is responsible for the 3' incision and the C-terminal half is responsible for the 5' incision. This chain is UvrABC system protein C, found in Listeria monocytogenes serotype 4a (strain HCC23).